A 1812-amino-acid polypeptide reads, in one-letter code: Putative surface cell antigen sca2 (1812 aa).

Positions 1 to 17 (MSTCLLTSSFLSTSARA) are cleaved as a signal peptide. Composition is skewed to polar residues over residues 344–357 (FLNN…STGR) and 371–382 (MSNQSIHNTGTS). Disordered stretches follow at residues 344–382 (FLNN…TGTS), 648–691 (LEQT…QGFS), and 1338–1462 (KQEN…KKDV). Positions 656-685 (PNPPPLPLNGGIPNPPPLPLNGSMPPPPPL) are enriched in pro residues. Composition is skewed to basic and acidic residues over residues 1349–1367 (STKD…EQSD) and 1382–1393 (SKNDKSSDDKKS). Residues 1401 to 1416 (DEDDTGYATDEEELEE) are compositionally biased toward acidic residues. Positions 1417–1455 (SNSTTNEELEESNSTTNEELEESNSTTNEELEESNSTTN) are enriched in low complexity. The 280-residue stretch at 1533 to 1812 (ETSINRGVWI…QGLIKLKVNL (280 aa)) folds into the Autotransporter domain.

Its subcellular location is the cell outer membrane. This is Putative surface cell antigen sca2 (sca2) from Rickettsia sibirica (strain ATCC VR-151 / 246).